A 596-amino-acid polypeptide reads, in one-letter code: Putative terpene synthase 3, chloroplastic (596 aa).

The N-terminal 46 residues, 1 to 46 (MATLSMQVSTLSKQVKNLNTFGMGSASKLPMVARRVSTIRLRPICS), are a transit peptide targeting the chloroplast. D349 and D353 together coordinate Mn(2+). The short motif at 349 to 353 (DDVYD) is the DDXXD motif element. 2 homodimerization regions span residues 355-361 (YGTLDEL) and 427-464 (EAKW…FTLP). Mn(2+)-binding residues include D493 and E501.

Belongs to the terpene synthase family. As to quaternary structure, homodimer. It depends on Mn(2+) as a cofactor. The cofactor is Mg(2+).

It is found in the plastid. The protein resides in the chloroplast. The protein operates within secondary metabolite biosynthesis; terpenoid biosynthesis. Putative monoterpene synthase. The polypeptide is Putative terpene synthase 3, chloroplastic (Thymus vulgaris (Thyme)).